Here is a 93-residue protein sequence, read N- to C-terminus: uncharacterized protein (93 aa).

3 helical membrane-spanning segments follow: residues 15–35 (MAGL…VMLV), 48–68 (ILAI…IYQI), and 72–92 (LSYA…AGVH).

It is found in the cell membrane. This is an uncharacterized protein from Bacillus subtilis (strain 168).